A 228-amino-acid chain; its full sequence is Phosphoglycolate phosphatase (228 aa).

The Nucleophile role is filled by aspartate 12. Mg(2+)-binding residues include aspartate 12, aspartate 14, and aspartate 177.

Belongs to the HAD-like hydrolase superfamily. CbbY/CbbZ/Gph/YieH family. It depends on Mg(2+) as a cofactor.

The enzyme catalyses 2-phosphoglycolate + H2O = glycolate + phosphate. It functions in the pathway organic acid metabolism; glycolate biosynthesis; glycolate from 2-phosphoglycolate: step 1/1. In terms of biological role, specifically catalyzes the dephosphorylation of 2-phosphoglycolate. Is involved in the dissimilation of the intracellular 2-phosphoglycolate formed during the DNA repair of 3'-phosphoglycolate ends, a major class of DNA lesions induced by oxidative stress. This is Phosphoglycolate phosphatase from Vibrio parahaemolyticus serotype O3:K6 (strain RIMD 2210633).